We begin with the raw amino-acid sequence, 101 residues long: Small ribosomal subunit protein uS14 (101 aa).

Belongs to the universal ribosomal protein uS14 family. As to quaternary structure, part of the 30S ribosomal subunit. Contacts proteins S3 and S10.

Its function is as follows. Binds 16S rRNA, required for the assembly of 30S particles and may also be responsible for determining the conformation of the 16S rRNA at the A site. The polypeptide is Small ribosomal subunit protein uS14 (Alkalilimnicola ehrlichii (strain ATCC BAA-1101 / DSM 17681 / MLHE-1)).